Consider the following 453-residue polypeptide: NADH-quinone oxidoreductase subunit D (453 aa).

Basic and acidic residues predominate over residues 1 to 21 (MKDTETRPGRHRAPEPAHPEQ). Residues 1-30 (MKDTETRPGRHRAPEPAHPEQPDTTGDTVV) form a disordered region.

Belongs to the complex I 49 kDa subunit family. As to quaternary structure, NDH-1 is composed of 14 different subunits. Subunits NuoB, C, D, E, F, and G constitute the peripheral sector of the complex.

It localises to the cell membrane. It catalyses the reaction a quinone + NADH + 5 H(+)(in) = a quinol + NAD(+) + 4 H(+)(out). In terms of biological role, NDH-1 shuttles electrons from NADH, via FMN and iron-sulfur (Fe-S) centers, to quinones in the respiratory chain. The immediate electron acceptor for the enzyme in this species is believed to be a menaquinone. Couples the redox reaction to proton translocation (for every two electrons transferred, four hydrogen ions are translocated across the cytoplasmic membrane), and thus conserves the redox energy in a proton gradient. This Nocardia farcinica (strain IFM 10152) protein is NADH-quinone oxidoreductase subunit D.